Here is a 1343-residue protein sequence, read N- to C-terminus: DNA-directed RNA polymerase subunit beta (1343 aa).

Belongs to the RNA polymerase beta chain family. The RNAP catalytic core consists of 2 alpha, 1 beta, 1 beta' and 1 omega subunit. When a sigma factor is associated with the core the holoenzyme is formed, which can initiate transcription.

The enzyme catalyses RNA(n) + a ribonucleoside 5'-triphosphate = RNA(n+1) + diphosphate. DNA-dependent RNA polymerase catalyzes the transcription of DNA into RNA using the four ribonucleoside triphosphates as substrates. This Shewanella woodyi (strain ATCC 51908 / MS32) protein is DNA-directed RNA polymerase subunit beta.